The following is a 304-amino-acid chain: D-alanine--D-alanine ligase (304 aa).

Residues 100–301 form the ATP-grasp domain; it reads KLVALQSGIP…FGEFLEDLIK (202 aa). Residue 129 to 184 participates in ATP binding; it reads ERKLGSPFIVKPCDVGSTIGLSLVRSASEYEVALEEAFRFSDRLLLEEFIDGFEVT. The Mg(2+) site is built by aspartate 256, glutamate 268, and asparagine 270.

It belongs to the D-alanine--D-alanine ligase family. Requires Mg(2+) as cofactor. The cofactor is Mn(2+).

The protein localises to the cytoplasm. The enzyme catalyses 2 D-alanine + ATP = D-alanyl-D-alanine + ADP + phosphate + H(+). It participates in cell wall biogenesis; peptidoglycan biosynthesis. Functionally, cell wall formation. This is D-alanine--D-alanine ligase from Coprothermobacter proteolyticus (strain ATCC 35245 / DSM 5265 / OCM 4 / BT).